The primary structure comprises 406 residues: Cysteine desulfurase (406 aa).

N6-(pyridoxal phosphate)lysine is present on lysine 226. Cysteine 364 (cysteine persulfide intermediate) is an active-site residue.

The protein belongs to the class-V pyridoxal-phosphate-dependent aminotransferase family. Csd subfamily. In terms of assembly, homodimer. Interacts with SufE and the SufBCD complex composed of SufB, SufC and SufD. The interaction with SufE is required to mediate the direct transfer of the sulfur atom from the S-sulfanylcysteine. The cofactor is pyridoxal 5'-phosphate.

It is found in the cytoplasm. The enzyme catalyses (sulfur carrier)-H + L-cysteine = (sulfur carrier)-SH + L-alanine. It catalyses the reaction L-selenocysteine + AH2 = hydrogenselenide + L-alanine + A + H(+). The protein operates within cofactor biosynthesis; iron-sulfur cluster biosynthesis. Its function is as follows. Cysteine desulfurases mobilize the sulfur from L-cysteine to yield L-alanine, an essential step in sulfur metabolism for biosynthesis of a variety of sulfur-containing biomolecules. Component of the suf operon, which is activated and required under specific conditions such as oxidative stress and iron limitation. Acts as a potent selenocysteine lyase in vitro, that mobilizes selenium from L-selenocysteine. Selenocysteine lyase activity is however unsure in vivo. The protein is Cysteine desulfurase of Escherichia coli O139:H28 (strain E24377A / ETEC).